The following is a 984-amino-acid chain: Hyaluronate lyase (984 aa).

3 stretches are compositionally biased toward polar residues: residues Met-1–Lys-12, Asp-19–His-32, and Ile-54–Ser-66. Disordered stretches follow at residues Met-1–His-32 and Asp-49–Lys-68. Positions Met-1–Ala-40 are cleaved as a signal peptide. Residues Asn-429, His-479, and Tyr-488 contribute to the active site. Residues Thr-701–Thr-726 show a composition bias toward basic and acidic residues. Residues Thr-701–Gln-728 form a disordered region.

It belongs to the polysaccharide lyase 8 family.

The protein resides in the secreted. It carries out the reaction [hyaluronan](n) = n 3-(4-deoxy-beta-D-gluc-4-enuronosyl)-N-acetyl-D-glucosamine + H2O. The sequence is that of Hyaluronate lyase from Streptococcus agalactiae serotype III (strain NEM316).